Consider the following 318-residue polypeptide: Ribose-phosphate pyrophosphokinase 1 (318 aa).

96–101 (RQDKKD) serves as a coordination point for ATP. Mg(2+)-binding residues include D128, H130, D139, and D143. Residue H130 participates in ATP binding. The tract at residues 212–227 (KDRVAILVDDMADTCG) is binding of phosphoribosylpyrophosphate.

The protein belongs to the ribose-phosphate pyrophosphokinase family. In terms of assembly, homodimer. The active form is probably a hexamer composed of 3 homodimers. Requires Mg(2+) as cofactor.

It catalyses the reaction D-ribose 5-phosphate + ATP = 5-phospho-alpha-D-ribose 1-diphosphate + AMP + H(+). It functions in the pathway metabolic intermediate biosynthesis; 5-phospho-alpha-D-ribose 1-diphosphate biosynthesis; 5-phospho-alpha-D-ribose 1-diphosphate from D-ribose 5-phosphate (route I): step 1/1. With respect to regulation, activated by magnesium and inorganic phosphate. Its function is as follows. Catalyzes the synthesis of phosphoribosylpyrophosphate (PRPP) that is essential for nucleotide synthesis. The polypeptide is Ribose-phosphate pyrophosphokinase 1 (PRPS1) (Macaca fascicularis (Crab-eating macaque)).